A 361-amino-acid polypeptide reads, in one-letter code: tRNA-specific 2-thiouridylase MnmA (361 aa).

ATP is bound by residues 11–18 (GMSGGVDS) and methionine 37. Cysteine 106 serves as the catalytic Nucleophile. Cysteine 106 and cysteine 202 are oxidised to a cystine. ATP is bound at residue glycine 130. The tract at residues 152–154 (KDQ) is interaction with tRNA. Cysteine 202 functions as the Cysteine persulfide intermediate in the catalytic mechanism. Residues 308-309 (RY) are interaction with tRNA.

It belongs to the MnmA/TRMU family.

The protein localises to the cytoplasm. It carries out the reaction S-sulfanyl-L-cysteinyl-[protein] + uridine(34) in tRNA + AH2 + ATP = 2-thiouridine(34) in tRNA + L-cysteinyl-[protein] + A + AMP + diphosphate + H(+). Catalyzes the 2-thiolation of uridine at the wobble position (U34) of tRNA, leading to the formation of s(2)U34. This Clostridium botulinum (strain Eklund 17B / Type B) protein is tRNA-specific 2-thiouridylase MnmA.